The chain runs to 176 residues: MAEEEVDYVFKVVLNGDSAVGKSQLRARFTRDEFSMDSKATIRCRFQYSNAPYYKGAVGAMLVYDMTIRESFEHIPQWLEELRVHADKNIVIILIGNKTDLENQRSVPVEDAKEFAEKEGLFFLETSALNSTNVENSFNTLLTEIFNKVNKKNLAKTTVSCSSQVSLLRPPCVAAQ.

Belongs to the small GTPase superfamily. Rab family.

The polypeptide is Putative Ras-related protein RABA4e (RABA4E) (Arabidopsis thaliana (Mouse-ear cress)).